The following is a 238-amino-acid chain: Opacity protein opA60 (238 aa).

Alanine 1 is a signal peptide.

It belongs to the opacity porin family.

The protein localises to the cell outer membrane. In terms of biological role, implicated in a number of adherence functions. OPA proteins are implicated in pathogenesis and are subject to phase variation. The chain is Opacity protein opA60 (opaH) from Neisseria gonorrhoeae.